The following is a 448-amino-acid chain: Zinc finger and BTB domain-containing protein 14 (448 aa).

Positions 36–102 (CDIAIVVEDV…MYTAKISVKK (67 aa)) constitute a BTB domain. Positions 50-66 (HRCVLAACSTYFKKLFK) match the Nuclear localization signal motif. Residues 130 to 193 (VSSPEENTQS…QEDGKSPTTT (64 aa)) are disordered. The segment covering 156–167 (DTQDDEVEEIGD) has biased composition (acidic residues). C2H2-type zinc fingers lie at residues 275 to 302 (IVCQ…ADRP), 303 to 330 (FVCE…GYKP), 331 to 358 (YSCE…NERP), 359 to 386 (FACH…GEKP), and 387 to 415 (FVCG…ERKQ). The segment covering 404–415 (RHENNMHSERKQ) has biased composition (basic and acidic residues). Residues 404–425 (RHENNMHSERKQVTTANSIQSE) form a disordered region. Positions 416–425 (VTTANSIQSE) are enriched in polar residues.

It belongs to the krueppel C2H2-type zinc-finger protein family. As to quaternary structure, interacts with ZBTB21.

It is found in the nucleus. Transcriptional activator of the dopamine transporter (DAT), binding it's promoter at the consensus sequence 5'-CCTGCACAGTTCACGGA-3'. Binds to 5'-d(GCC)(n)-3' trinucleotide repeats in promoter regions and acts as a repressor of the FMR1 gene. Transcriptional repressor of MYC and thymidine kinase promoters. In Gallus gallus (Chicken), this protein is Zinc finger and BTB domain-containing protein 14 (ZBTB14).